The sequence spans 84 residues: Toxin Aah4 (84 aa).

The N-terminal stretch at 1 to 19 is a signal peptide; that stretch reads MNYLIMFSLALLLVIGVES. Residues 21–82 enclose the LCN-type CS-alpha/beta domain; the sequence is RDGYIVDSKN…PIKDPSDDCH (62 aa). Cystine bridges form between cysteine 31-cysteine 81, cysteine 35-cysteine 53, cysteine 39-cysteine 63, and cysteine 43-cysteine 65. Position 84 (arginine 84) is a propeptide, removed by a carboxypeptidase.

Belongs to the long (4 C-C) scorpion toxin superfamily. Sodium channel inhibitor family. Alpha subfamily. As to expression, expressed by the venom gland.

The protein localises to the secreted. Alpha toxins bind voltage-independently at site-3 of sodium channels (Nav) and inhibit the inactivation of the activated channels, thereby blocking neuronal transmission. This toxin seems to specifically act on Nav1.6/SCN8A sodium channel. In vitro, it inhibits the proliferation of the prostate cancer cell line DU145 (IC(50)=15 uM). It shows low effect on the adhesion of DU145 cells to fibronectin (at 15 uM) and is inactive on DU145 cells migration. In Androctonus australis (Sahara scorpion), this protein is Toxin Aah4.